We begin with the raw amino-acid sequence, 280 residues long: Transmembrane protein 119 (280 aa).

The signal sequence occupies residues 1 to 20 (MVPWFLLSLLLLARPVPGVA). Residues 21 to 91 (YSVSLPASFL…IMDFFRQYVM (71 aa)) are Extracellular-facing. O-linked (Xyl...) (chondroitin sulfate) serine glycosylation is present at S36. Residues 38–47 (EAEGSSASSP) show a composition bias toward low complexity. The tract at residues 38-73 (EAEGSSASSPSLPPPGTPAFSPTPERPQPTALDGPV) is disordered. The chain crosses the membrane as a helical span at residues 92-112 (LIAVVGSLTFLIMFIVCAALI). Residues 113-280 (TRQKHKATAY…CACNRVSPSV (168 aa)) lie on the Cytoplasmic side of the membrane. Disordered regions lie at residues 133–162 (VDQRDRAGGPRTFSEVPDRAPDSRHEEGLD) and 181–280 (PARA…SPSV). Basic and acidic residues predominate over residues 148 to 162 (VPDRAPDSRHEEGLD). S269 is subject to Phosphoserine.

As to quaternary structure, interacts with SMAD1, SMAD5 and RUNX2. As to expression, expressed in spermatocytes and spermatids in the developing testis (at protein level). Expressed in the brain, heart, lung, spleen, skeletal muscle, ovary, testis and epididymis. Predominantly expressed in osteoblasts.

The protein localises to the cell membrane. The protein resides in the cytoplasm. Its subcellular location is the endoplasmic reticulum membrane. It localises to the secreted. Functionally, plays an important role in bone formation and normal bone mineralization. Promotes the differentiation of myoblasts into osteoblasts. May induce the commitment and differentiation of myoblasts into osteoblasts through an enhancement of BMP2 production and interaction with the BMP-RUNX2 pathway. Up-regulates the expression of ATF4 which plays a central role in osteoblast differentiation. Essential for normal spermatogenesis and late testicular differentiation. This chain is Transmembrane protein 119 (Tmem119), found in Mus musculus (Mouse).